Reading from the N-terminus, the 185-residue chain is uncharacterized protein (185 aa).

This is an uncharacterized protein from Trypanosoma brucei brucei.